A 355-amino-acid polypeptide reads, in one-letter code: Ribosomal RNA large subunit methyltransferase M (355 aa).

Residues Ser183, 216–219, Asp235, Asp255, and Asp271 each bind S-adenosyl-L-methionine; that span reads SPGG. Catalysis depends on Lys300, which acts as the Proton acceptor.

This sequence belongs to the class I-like SAM-binding methyltransferase superfamily. RNA methyltransferase RlmE family. RlmM subfamily. Monomer.

It localises to the cytoplasm. It carries out the reaction cytidine(2498) in 23S rRNA + S-adenosyl-L-methionine = 2'-O-methylcytidine(2498) in 23S rRNA + S-adenosyl-L-homocysteine + H(+). Its function is as follows. Catalyzes the 2'-O-methylation at nucleotide C2498 in 23S rRNA. The sequence is that of Ribosomal RNA large subunit methyltransferase M from Pseudomonas putida (strain W619).